We begin with the raw amino-acid sequence, 306 residues long: Palmitoyl-protein thioesterase 1 (306 aa).

The signal sequence occupies residues 1 to 27; sequence MASSSCLWLLALAFLLGSCASLALGHL. Cystine bridges form between Cys-45-Cys-46, Cys-96-Cys-128, and Cys-152-Cys-160. Residue Ser-115 is part of the active site. N-linked (GlcNAc...) asparagine glycosylation is found at Asn-197, Asn-212, and Asn-232. Residues Asp-233 and His-289 contribute to the active site.

This sequence belongs to the palmitoyl-protein thioesterase family. As to quaternary structure, interacts with CLN5, ATP5F1A and ATP5F1B. In terms of processing, glycosylated. In terms of tissue distribution, spleen, brain, seminal vesicle, and testis. Lower levels of activity in liver, heart, lung, and skeletal muscle.

Its subcellular location is the lysosome. It is found in the secreted. The protein localises to the golgi apparatus. It localises to the endoplasmic reticulum. It carries out the reaction S-hexadecanoyl-L-cysteinyl-[protein] + H2O = L-cysteinyl-[protein] + hexadecanoate + H(+). The enzyme catalyses hexadecanoyl-CoA + H2O = hexadecanoate + CoA + H(+). The catalysed reaction is S-hexadecanoyl-N-acetylcysteamine + H2O = N-acetylcysteamine + hexadecanoate + H(+). It catalyses the reaction S-hexadecanoyl-N-acetylcysteine methyl ester + H2O = N-acetylcysteine methyl ester + hexadecanoate + H(+). Its activity is regulated as follows. Palmitoylation reduces PPT1 enzymatic activity. Its function is as follows. Has thioesterase activity against fatty acid thioesters with 14 -18 carbons, including palmitoyl-CoA, S-palmitoyl-N-acetylcysteamine, and palmitoylated proteins. In contrast to PPT2, PPT1 can hydrolyze palmitoylated proteins and palmitoylcysteine. The chain is Palmitoyl-protein thioesterase 1 (PPT1) from Bos taurus (Bovine).